Consider the following 333-residue polypeptide: Torsin-1A (333 aa).

The first 20 residues, Met1–Ala20, serve as a signal peptide directing secretion. Residues Lys92–Gly252 form an interaction with SNAPIN region. Gly103 to Asn110 serves as a coordination point for ATP. N-linked (GlcNAc...) asparagine glycans are attached at residues Asn144 and Asn159. Positions Gly252–Asp333 are interaction with KLC1. The segment at Lys313–Asp333 is interaction with SYNE3.

It belongs to the ClpA/ClpB family. Torsin subfamily. Homohexamer. Interacts with TOR1B; the interaction may be specific of neural tissues. Interacts (ATP-bound) with TOR1AIP1 and TOR1AIP2; the interactions induce ATPase activity. Interacts with KLHL14; preferentially when ATP-free. Interacts with KLC1 (via TPR repeats); the interaction associates TOR1A with the kinesin oligomeric complex. Interacts with COPS4; the interaction associates TOR1A with the CSN complex. Interacts with SNAPIN; the interaction is direct and associates SNAPIN with the CSN complex. Interacts with STON2. Interacts (ATP-bound) with SYNE3 (via KASH domain); the interaction is required for SYNE3 nuclear envelope localization. Interacts with VIM; the interaction associates TOR1A with the cytoskeleton. Interacts with PLEC. Interacts (ATP-bound) with SLC6A3; regulates SLC6A3 transport to the plasma membrane. N-glycosylated. In terms of tissue distribution, widely expressed (at protein level).

The protein localises to the endoplasmic reticulum lumen. The protein resides in the nucleus membrane. It is found in the cell projection. It localises to the growth cone. Its subcellular location is the cytoplasmic vesicle membrane. The protein localises to the synapse. The protein resides in the synaptosome. It is found in the cytoplasm. It localises to the cytoskeleton. Its subcellular location is the cytoplasmic vesicle. The protein localises to the secretory vesicle. The protein resides in the synaptic vesicle. It carries out the reaction ATP + H2O = ADP + phosphate + H(+). In terms of biological role, protein with chaperone functions important for the control of protein folding, processing, stability and localization as well as for the reduction of misfolded protein aggregates. Involved in the regulation of synaptic vesicle recycling, controls STON2 protein stability in collaboration with the COP9 signalosome complex (CSN). In the nucleus, may link the cytoskeleton with the nuclear envelope, this mechanism seems to be crucial for the control of nuclear polarity, cell movement and, specifically in neurons, nuclear envelope integrity. Participates in the cellular trafficking and may regulate the subcellular location of multipass membrane proteins such as the dopamine transporter SLC6A3, leading to the modulation of dopamine neurotransmission. In the endoplasmic reticulum, plays a role in the quality control of protein folding by increasing clearance of misfolded proteins such as SGCE variants or holding them in an intermediate state for proper refolding. May have a redundant function with TOR1B in non-neural tissues. The sequence is that of Torsin-1A (Tor1a) from Mus musculus (Mouse).